Consider the following 629-residue polypeptide: tRNA uridine 5-carboxymethylaminomethyl modification enzyme MnmG (629 aa).

13-18 (GGGHAG) serves as a coordination point for FAD. Position 273–287 (273–287 (GPRYCPSIEDKIHRF)) interacts with NAD(+).

The protein belongs to the MnmG family. In terms of assembly, homodimer. Heterotetramer of two MnmE and two MnmG subunits. It depends on FAD as a cofactor.

The protein localises to the cytoplasm. Functionally, NAD-binding protein involved in the addition of a carboxymethylaminomethyl (cmnm) group at the wobble position (U34) of certain tRNAs, forming tRNA-cmnm(5)s(2)U34. This Shewanella baltica (strain OS185) protein is tRNA uridine 5-carboxymethylaminomethyl modification enzyme MnmG.